Here is a 30-residue protein sequence, read N- to C-terminus: Alpha-defensin PhD-4 (30 aa).

Intrachain disulfides connect Cys-2–Cys-30, Cys-4–Cys-19, and Cys-9–Cys-29.

It localises to the secreted. Functionally, in low salt conditions, has antibacterial activity against the Gram-negative bacterium E.coli ML35p (MIC=2.4 uM), the Gram-positive bacteria L.monocytogenes EGD (MIC=2.2 uM) and methicillin-resistant S.aureus ATCC 33591 (MIC=3.5 uM), and the fungus C.albicans 820 (MIC=3.9 uM). At high physiological salt concentrations the antimicrobial activity decreases significantly: E.coli ML35p (MIC=7.1 uM), L.monocytogenes EGD (MIC=1.8 uM), S.aureus ATCC 33591 (MIC=&gt;50 uM), and C.albicans 820 (MIC=&gt;50 uM). This is Alpha-defensin PhD-4 from Papio hamadryas (Hamadryas baboon).